The chain runs to 397 residues: Tyrosine--tRNA ligase (397 aa).

Positions 41 to 50 match the 'HIGH' region motif; the sequence is PTAPDLHLGH. The 'KMSKS' region motif lies at 225–229; it reads KMSKS. Lys228 is a binding site for ATP. One can recognise an S4 RNA-binding domain in the interval 340-396; it reads AFLADSGLAGSRGEAKRLIKQGALSLDGEKLDDPNTPLTAGEYVVRLGKKRFLRLIV.

It belongs to the class-I aminoacyl-tRNA synthetase family. TyrS type 2 subfamily. As to quaternary structure, homodimer.

It localises to the cytoplasm. The enzyme catalyses tRNA(Tyr) + L-tyrosine + ATP = L-tyrosyl-tRNA(Tyr) + AMP + diphosphate + H(+). Functionally, catalyzes the attachment of tyrosine to tRNA(Tyr) in a two-step reaction: tyrosine is first activated by ATP to form Tyr-AMP and then transferred to the acceptor end of tRNA(Tyr). In Oleidesulfovibrio alaskensis (strain ATCC BAA-1058 / DSM 17464 / G20) (Desulfovibrio alaskensis), this protein is Tyrosine--tRNA ligase.